The following is a 197-amino-acid chain: Isochorismatase domain-containing protein 2 (197 aa).

Belongs to the isochorismatase family.

The sequence is that of Isochorismatase domain-containing protein 2 (isoc2) from Danio rerio (Zebrafish).